Here is a 394-residue protein sequence, read N- to C-terminus: Acetate kinase (394 aa).

Residue N7 coordinates Mg(2+). K14 contacts ATP. R90 is a substrate binding site. Catalysis depends on D147, which acts as the Proton donor/acceptor. Residues 204–208 (HLGNG), 278–280 (DLR), and 326–330 (GIGEN) each bind ATP. Mg(2+) is bound at residue E380.

Belongs to the acetokinase family. In terms of assembly, homodimer. Requires Mg(2+) as cofactor. Mn(2+) is required as a cofactor.

It is found in the cytoplasm. It carries out the reaction acetate + ATP = acetyl phosphate + ADP. It participates in metabolic intermediate biosynthesis; acetyl-CoA biosynthesis; acetyl-CoA from acetate: step 1/2. Functionally, catalyzes the formation of acetyl phosphate from acetate and ATP. Can also catalyze the reverse reaction. The sequence is that of Acetate kinase from Flavobacterium johnsoniae (strain ATCC 17061 / DSM 2064 / JCM 8514 / BCRC 14874 / CCUG 350202 / NBRC 14942 / NCIMB 11054 / UW101) (Cytophaga johnsonae).